A 505-amino-acid polypeptide reads, in one-letter code: uncharacterized protein (505 aa).

Positions 1-52 (MVDGSIHVPVQSHEGQHDNSSSLNEEIQTSQDPLGIVESYQESSTSDFDKSH) are disordered. The span at 18-32 (DNSSSLNEEIQTSQD) shows a compositional bias: polar residues. A run of 10 helical transmembrane segments spans residues 141–161 (FWIVFFLGQVLSLCITATNTF), 173–193 (AFQTFLVYALLTLVYTPYTVF), 208–228 (GWKYIIFAFFDVEGNYFVVLA), 235–255 (LSASLLDSWATVAVVILSFIF), 265–285 (ILGVVACIGGLVLLVVSDVIS), 290–310 (SAVNPGLGDGYMIIGATCYGV), 326–346 (VVIGQLSLYGSIISIIQTFIF), 362–382 (GYLAGFILVMFLLYSLAPILF), 389–409 (FYNISLLTSDFWSLVIGIHVF), and 415–435 (WLYPIAFVLIILGLFVYHVFV). Phosphoserine is present on residues Ser-463, Ser-466, and Ser-467.

Belongs to the SLC35F solute transporter family.

The protein resides in the golgi apparatus membrane. This is an uncharacterized protein from Schizosaccharomyces pombe (strain 972 / ATCC 24843) (Fission yeast).